Consider the following 211-residue polypeptide: MGQKVNPIGFRLGVIKTWDSKWYAEKDYAKLLHEDLKLRNFLKKRLYHSGVSKIEIERAAGKAKINIFTARPGLIIGKKGSEVETLKKELAKLTEKEVYLNIQEVRKPELDAQLVAENVAMQLERRIAFRRAMKKSVTSTLKFGAKGIRITCSGRLGGAEMSRTEWYREGRVPLHTLRADIDYGFAEAKTTYGIIGVKVLLFKGEVLSAKK.

A KH type-2 domain is found at leucine 38 to arginine 106.

This sequence belongs to the universal ribosomal protein uS3 family. In terms of assembly, part of the 30S ribosomal subunit. Forms a tight complex with proteins S10 and S14.

In terms of biological role, binds the lower part of the 30S subunit head. Binds mRNA in the 70S ribosome, positioning it for translation. In Geobacter sp. (strain M21), this protein is Small ribosomal subunit protein uS3.